A 194-amino-acid chain; its full sequence is Imidazoleglycerol-phosphate dehydratase (194 aa).

This sequence belongs to the imidazoleglycerol-phosphate dehydratase family.

The protein localises to the cytoplasm. It catalyses the reaction D-erythro-1-(imidazol-4-yl)glycerol 3-phosphate = 3-(imidazol-4-yl)-2-oxopropyl phosphate + H2O. It participates in amino-acid biosynthesis; L-histidine biosynthesis; L-histidine from 5-phospho-alpha-D-ribose 1-diphosphate: step 6/9. The polypeptide is Imidazoleglycerol-phosphate dehydratase (Caldanaerobacter subterraneus subsp. tengcongensis (strain DSM 15242 / JCM 11007 / NBRC 100824 / MB4) (Thermoanaerobacter tengcongensis)).